The sequence spans 159 residues: Succinate dehydrogenase [ubiquinone] cytochrome b small subunit, mitochondrial (159 aa).

Residues 1–56 (MAVLLKLGVLCSGQGARALLLRSRVVRPAYVSAFLQDQPTQGRCGTQHIHLSPSHH) constitute a mitochondrion transit peptide. At 57–63 (SGSKAAS) the chain is on the mitochondrial matrix side. A helical transmembrane segment spans residues 64 to 85 (LHWTSERVVSVLLLGLIPAGYL). Residues 86–90 (NPCSV) are Mitochondrial intermembrane-facing. The chain crosses the membrane as a helical span at residues 91-111 (VDYSLAAALTLHSHWGLGQVV). Histidine 102 is a heme b binding site. At 112–120 (TDYVHGDTL) the chain is on the mitochondrial matrix side. An a ubiquinone-binding site is contributed by tyrosine 114. A helical membrane pass occupies residues 121-142 (PKAARAGLLALSALTFAGLCYF). The Mitochondrial intermembrane portion of the chain corresponds to 143-159 (NYHDVGICRAVAMLWKL).

Belongs to the CybS family. In terms of assembly, component of complex II composed of four subunits: the flavoprotein (FP) SDHA, iron-sulfur protein (IP) SDHB, and a cytochrome b560 composed of SDHC and SDHD.

The protein resides in the mitochondrion inner membrane. Its pathway is carbohydrate metabolism; tricarboxylic acid cycle. In terms of biological role, membrane-anchoring subunit of succinate dehydrogenase (SDH) that is involved in complex II of the mitochondrial electron transport chain and is responsible for transferring electrons from succinate to ubiquinone (coenzyme Q). SDH also oxidizes malate to the non-canonical enol form of oxaloacetate, enol-oxaloacetate. Enol-oxaloacetate, which is a potent inhibitor of the succinate dehydrogenase activity, is further isomerized into keto-oxaloacetate. The sequence is that of Succinate dehydrogenase [ubiquinone] cytochrome b small subunit, mitochondrial (Sdhd) from Mus musculus (Mouse).